A 381-amino-acid chain; its full sequence is Flagellar P-ring protein (381 aa).

Residues 1–33 (MQFFNTLHPTRPHWLLAALCLIASLLGAGTAQA) form the signal peptide.

The protein belongs to the FlgI family. In terms of assembly, the basal body constitutes a major portion of the flagellar organelle and consists of four rings (L,P,S, and M) mounted on a central rod.

Its subcellular location is the periplasm. It is found in the bacterial flagellum basal body. Assembles around the rod to form the L-ring and probably protects the motor/basal body from shearing forces during rotation. This Albidiferax ferrireducens (strain ATCC BAA-621 / DSM 15236 / T118) (Rhodoferax ferrireducens) protein is Flagellar P-ring protein.